The sequence spans 344 residues: Ribosomal RNA large subunit methyltransferase Cfr (344 aa).

Catalysis depends on E90, which acts as the Proton acceptor. Positions 97–330 constitute a Radical SAM core domain; that stretch reads KQGWESFCIS…ATVRTQFGSE (234 aa). The cysteines at positions 104 and 335 are disulfide-linked. [4Fe-4S] cluster contacts are provided by C111, C115, and C118. S-adenosyl-L-methionine is bound by residues 157–158, S188, 211–213, and N292; these read GE and SLH. C335 acts as the S-methylcysteine intermediate in catalysis.

It belongs to the radical SAM superfamily. RlmN family. Cfr subfamily. It depends on [4Fe-4S] cluster as a cofactor.

The protein resides in the cytoplasm. It catalyses the reaction adenosine(2503) in 23S rRNA + 2 reduced [2Fe-2S]-[ferredoxin] + 2 S-adenosyl-L-methionine = 8-methyladenosine(2503) in 23S rRNA + 5'-deoxyadenosine + L-methionine + 2 oxidized [2Fe-2S]-[ferredoxin] + S-adenosyl-L-homocysteine. Functionally, specifically methylates position 8 of adenine 2503 in 23S rRNA. Confers resistance to some classes of antibiotics. This is Ribosomal RNA large subunit methyltransferase Cfr from Clostridium botulinum (strain Okra / Type B1).